Consider the following 1942-residue polypeptide: Myosin-1 (1942 aa).

Residues 33–82 enclose the Myosin N-terminal SH3-like domain; the sequence is DAKSSVFVVDAKESFVKATVQSREGGKVTAKTEGGTTVTVKDDQVYPMNP. At serine 36 the chain carries Phosphoserine. Residues threonine 64 and threonine 69 each carry the phosphothreonine modification. One can recognise a Myosin motor domain in the interval 86 to 785; the sequence is DKIEDMAMMT…LLGLLEEMRD (700 aa). At lysine 130 the chain carries N6,N6,N6-trimethyllysine. ATP is bound at residue 179–186; the sequence is GESGAGKT. Tyrosine 389 is subject to Phosphotyrosine. A Phosphothreonine modification is found at threonine 419. Tyrosine 424 bears the Phosphotyrosine mark. Serine 625 is modified (phosphoserine). The actin-binding stretch occupies residues 662-684; sequence LNKLMTNLRSTHPHFVRCIIPNE. Position 760 is a pros-methylhistidine (histidine 760). The actin-binding stretch occupies residues 764–778; the sequence is KFGHTKVFFKAGLLG. The 30-residue stretch at 788-817 folds into the IQ domain; sequence LAQLITRTQAMCRGYLARVEYQKMVERRES. The stretch at 846-1942 forms a coiled coil; the sequence is LLKSAETEKE…EVHTKIISEE (1097 aa). Phosphoserine occurs at positions 1095, 1099, 1165, 1240, and 1246. The tract at residues 1156 to 1175 is disordered; it reads RLEEAGGATSAQIEMNKKRE. Position 1258 is a phosphothreonine (threonine 1258). Phosphoserine is present on serine 1264. Phosphothreonine is present on residues threonine 1268 and threonine 1289. Phosphoserine occurs at positions 1291, 1295, 1306, and 1309. Residue tyrosine 1467 is modified to Phosphotyrosine. At threonine 1470 the chain carries Phosphothreonine. Position 1477 is a phosphoserine (serine 1477). Tyrosine 1495 is subject to Phosphotyrosine. Serine 1498 bears the Phosphoserine mark. Position 1504 is a phosphothreonine (threonine 1504). Serine 1517 is modified (phosphoserine). Threonine 1520 is modified (phosphothreonine). 7 positions are modified to phosphoserine: serine 1545, serine 1557, serine 1577, serine 1603, serine 1606, serine 1717, and serine 1729. Phosphothreonine is present on residues threonine 1733 and threonine 1739. Serine 1742 bears the Phosphoserine mark.

Belongs to the TRAFAC class myosin-kinesin ATPase superfamily. Myosin family. As to quaternary structure, muscle myosin is a hexameric protein that consists of 2 heavy chain subunits (MHC), 2 alkali light chain subunits (MLC) and 2 regulatory light chain subunits (MLC-2). Interacts with SLC26A5. As to expression, expressed in the cochlea (at protein level). Strongly expressed in spiral ganglion neurons with axonal sprouts and supporting cells around hair cells. In the organ of Corti, it is expressed in inner and outer hair cells, and in supporting cells.

The protein localises to the cytoplasm. Its subcellular location is the myofibril. In terms of biological role, required for normal hearing. It plays a role in cochlear amplification of auditory stimuli, likely through the positive regulation of prestin (SLC26A5) activity and outer hair cell (OHC) electromotility. This Mus musculus (Mouse) protein is Myosin-1.